A 677-amino-acid chain; its full sequence is Methionine--tRNA ligase (677 aa).

Residues 15-25 (PYANGSIHLGH) carry the 'HIGH' region motif. Zn(2+) contacts are provided by C146, C149, C159, and C162. A 'KMSKS' region motif is present at residues 333-337 (KMSKS). K336 serves as a coordination point for ATP. A tRNA-binding domain is found at 575 to 677 (DFAKIDLRVA…SGAKPGQQVK (103 aa)).

This sequence belongs to the class-I aminoacyl-tRNA synthetase family. MetG type 1 subfamily. Homodimer. It depends on Zn(2+) as a cofactor.

It localises to the cytoplasm. The catalysed reaction is tRNA(Met) + L-methionine + ATP = L-methionyl-tRNA(Met) + AMP + diphosphate. Is required not only for elongation of protein synthesis but also for the initiation of all mRNA translation through initiator tRNA(fMet) aminoacylation. The protein is Methionine--tRNA ligase of Cronobacter sakazakii (strain ATCC BAA-894) (Enterobacter sakazakii).